A 110-amino-acid polypeptide reads, in one-letter code: Hydrogenase maturation factor HypA (110 aa).

His2 provides a ligand contact to Ni(2+). Cys70, Cys73, Cys86, and Cys89 together coordinate Zn(2+).

It belongs to the HypA/HybF family.

Its function is as follows. Involved in the maturation of [NiFe] hydrogenases. Required for nickel insertion into the metal center of the hydrogenase. In Geotalea uraniireducens (strain Rf4) (Geobacter uraniireducens), this protein is Hydrogenase maturation factor HypA.